The sequence spans 339 residues: Phenylalanine--tRNA ligase alpha subunit (339 aa).

Glu-254 serves as a coordination point for Mg(2+).

The protein belongs to the class-II aminoacyl-tRNA synthetase family. Phe-tRNA synthetase alpha subunit type 1 subfamily. As to quaternary structure, tetramer of two alpha and two beta subunits. The cofactor is Mg(2+).

It is found in the cytoplasm. The enzyme catalyses tRNA(Phe) + L-phenylalanine + ATP = L-phenylalanyl-tRNA(Phe) + AMP + diphosphate + H(+). The polypeptide is Phenylalanine--tRNA ligase alpha subunit (Alkaliphilus oremlandii (strain OhILAs) (Clostridium oremlandii (strain OhILAs))).